The following is a 716-amino-acid chain: Polyribonucleotide nucleotidyltransferase (716 aa).

Positions 495 and 501 each coordinate Mg(2+). One can recognise a KH domain in the interval 562 to 621; the sequence is PRLFRIQINPEQIGLVIGPGGKTIRSITEQTGAKIDIEDTGAVTISAVDADSALRAKSII. The S1 motif domain occupies 631 to 699; it reads GDVYIGKVTR…QKGRVNLTRK (69 aa).

This sequence belongs to the polyribonucleotide nucleotidyltransferase family. Mg(2+) serves as cofactor.

The protein localises to the cytoplasm. The enzyme catalyses RNA(n+1) + phosphate = RNA(n) + a ribonucleoside 5'-diphosphate. In terms of biological role, involved in mRNA degradation. Catalyzes the phosphorolysis of single-stranded polyribonucleotides processively in the 3'- to 5'-direction. The sequence is that of Polyribonucleotide nucleotidyltransferase from Synechococcus sp. (strain ATCC 27144 / PCC 6301 / SAUG 1402/1) (Anacystis nidulans).